We begin with the raw amino-acid sequence, 91 residues long: Small ribosomal subunit protein bS20 (91 aa).

Residues 1–21 (MPLHKSAEKRLRQSARRNERN) are compositionally biased toward basic and acidic residues. 2 disordered regions span residues 1 to 25 (MPLHKSAEKRLRQSARRNERNRARK) and 71 to 91 (NKASRKKSQLSRMLNAYAQKD).

The protein belongs to the bacterial ribosomal protein bS20 family.

Binds directly to 16S ribosomal RNA. This chain is Small ribosomal subunit protein bS20, found in Prosthecochloris aestuarii (strain DSM 271 / SK 413).